The sequence spans 183 residues: MDVLELYRRTGALLEGHFLLRSGMHSPFFLQSAALLQHPLYAEAVGEALGKLFKDEKVDFVIAPAIGGVVLSFVVAKALGARALFAEKDGRGGMLIRKGLTVNPGDRFLAVEDVVTTGESVRKAIRAAEARGGVLVGVGAIVDRSGGRAAFGVPFRALLALEVPHYPEEACPLCREGVPLEEV.

5-phospho-alpha-D-ribose 1-diphosphate is bound by residues Arg-21, Lys-88, and 112–120; that span reads EDVVTTGES. Thr-116 and Arg-144 together coordinate orotate.

The protein belongs to the purine/pyrimidine phosphoribosyltransferase family. PyrE subfamily. Homodimer. The cofactor is Mg(2+).

It catalyses the reaction orotidine 5'-phosphate + diphosphate = orotate + 5-phospho-alpha-D-ribose 1-diphosphate. Its pathway is pyrimidine metabolism; UMP biosynthesis via de novo pathway; UMP from orotate: step 1/2. Catalyzes the transfer of a ribosyl phosphate group from 5-phosphoribose 1-diphosphate to orotate, leading to the formation of orotidine monophosphate (OMP). This chain is Orotate phosphoribosyltransferase, found in Thermus thermophilus (strain ATCC 27634 / DSM 579 / HB8).